Consider the following 431-residue polypeptide: E3 ubiquitin-protein ligase RNF128 (431 aa).

The signal sequence occupies residues 1 to 38; the sequence is MGQLPGAGVFCRGGCGFSRLLAWCFLLVLSPQTPGSRG. N-linked (GlcNAc...) asparagine glycans are attached at residues Asn-48, Asn-59, and Asn-101. The region spanning 75–186 is the PA domain; it reads SPLEPVAGVL…LKGTKILQSI (112 aa). A helical membrane pass occupies residues 211 to 231; it reads IFFVSVSFFIITAATVGYFIF. The RING-type; atypical zinc-finger motif lies at 280–321; sequence CAVCIELYKPNDLVRILTCNHVFHKTCVDPWLLEHRTCPMCK. Over residues 345 to 354 the composition is skewed to polar residues; sequence VSNETSSNAS. The segment at 345-431 is disordered; sequence VSNETSSNAS…QETTVREIKS (87 aa).

Post-translationally, auto-ubiquitinated. Controls the development of T-cell clonal anergy by ubiquitination.

Its subcellular location is the cytoplasm. It is found in the endomembrane system. The protein resides in the cytoskeleton. The protein localises to the perinuclear region. The catalysed reaction is S-ubiquitinyl-[E2 ubiquitin-conjugating enzyme]-L-cysteine + [acceptor protein]-L-lysine = [E2 ubiquitin-conjugating enzyme]-L-cysteine + N(6)-ubiquitinyl-[acceptor protein]-L-lysine.. The protein operates within protein modification; protein ubiquitination. Functionally, E3 ubiquitin-protein ligase that catalyzes 'Lys-27', 'Lys-48'- or 'Lys-63'-linked polyubiquitin chains formation and plays a role in different biological processes such as modulation of immune response, cytoskeletal dynamics or protein homeostasis. Inhibits IL2 and IL4 transcription, thereby playing an important role in the induction of the anergic phenotype, a long-term stable state of T-lymphocyte unresponsiveness to antigenic stimulation associated with the blockade of interleukin production. Ubiquitinates ARPC5 with 'Lys-48' linkages and COR1A with 'Lys-63' linkages leading to their degradation, down-regulation of these cytoskeletal components results in impaired lamellipodium formation and reduced accumulation of F-actin at the immunological synapse. Functions in the patterning of the dorsal ectoderm; sensitizes ectoderm to respond to neural-inducing signals. Plays a positive role in innate immune response by promoting 'Lys-63'-linked ubiquitination of TBK1 after RNA- or DNA-virus infection. Regulates alveolar macrophage activation and neutrophil infiltration by interacting with TLR4, targeting it for degradation, and inhibiting NF-kappa-B activation, hence decreasing pro-inflammatory cytokines. Negatively regulates the IL-3/STAT5 signaling pathway by facilitating 'Lys-27'-linked polyubiquitination of IL3RA leading to its degradation via lysosomal pathway. Directly regulates the N-glycosylation process in the endoplasmic reticulum by targeting the glycosyl-transferase RPN1 for ubiquitination and degradation. Other substrates targeted for degradation by RNF128 include transmembrane proteins CD40L, CD83 or the tetraspanin CD151. This chain is E3 ubiquitin-protein ligase RNF128 (RNF128), found in Bos taurus (Bovine).